Here is a 360-residue protein sequence, read N- to C-terminus: Mannose-1-phosphate guanylyltransferase catalytic subunit beta (360 aa).

Residues 2-222 (KALILVGGYG…QGFWMDIGQP (221 aa)) are substrate-binding domain. Asp-110 provides a ligand contact to GDP-alpha-D-mannose. Asp-110 is a Mg(2+) binding site. The active site involves Lys-162. Residue Asp-218 coordinates GDP-alpha-D-mannose. Asp-218 serves as a coordination point for Mg(2+). A hexapeptide repeat domain region spans residues 245 to 360 (RAGPGFLGNV…DSVPEPRIIM (116 aa)).

The protein belongs to the transferase hexapeptide repeat family. In terms of assembly, component of the GMPPA-GMPPB mannose-1-phosphate guanylyltransferase complex composed of 4 gmppa subunits and 8 gmppb subunits; the complex is organized into three layers, a central layer made up of 2 gmppa dimers sandwiched between two layers each made up of 2 gmppb dimers. Catalytic activity of gmppb is reduced when part of the complex and binding of GDP-alpha-D-Mannose by gmppa induces allosteric feedback inhibition of gmppb. The cofactor is Mg(2+).

The catalysed reaction is alpha-D-mannose 1-phosphate + GTP + H(+) = GDP-alpha-D-mannose + diphosphate. It participates in nucleotide-sugar biosynthesis; GDP-alpha-D-mannose biosynthesis; GDP-alpha-D-mannose from alpha-D-mannose 1-phosphate (GTP route): step 1/1. Enzyme activity is reduced by incorporation into the GMPPA-GMPPB mannose-1-phosphate guanylyltransferase complex. Allosterically inhibited, when part of the GMPPA-GMPPB complex, by GDP-alpha-D-mannose binding to GMPPA. In terms of biological role, catalytic subunit of the GMPPA-GMPPB mannose-1-phosphate guanylyltransferase complex. Catalyzes the formation of GDP-mannose, an essential precursor of glycan moieties of glycoproteins and glycolipids. Can catalyze the reverse reaction in vitro. Together with GMPPA regulates GDP-alpha-D-mannose levels. This Danio rerio (Zebrafish) protein is Mannose-1-phosphate guanylyltransferase catalytic subunit beta (gmppb).